We begin with the raw amino-acid sequence, 128 residues long: Large-conductance mechanosensitive channel (128 aa).

The next 2 membrane-spanning stretches (helical) occupy residues 10–30 (FAMR…GAFG) and 76–96 (GLFI…FMMV).

This sequence belongs to the MscL family. As to quaternary structure, homopentamer.

Its subcellular location is the cell inner membrane. In terms of biological role, channel that opens in response to stretch forces in the membrane lipid bilayer. May participate in the regulation of osmotic pressure changes within the cell. The polypeptide is Large-conductance mechanosensitive channel (Mannheimia succiniciproducens (strain KCTC 0769BP / MBEL55E)).